The primary structure comprises 97 residues: Large ribosomal subunit protein uL23 (97 aa).

Belongs to the universal ribosomal protein uL23 family. In terms of assembly, part of the 50S ribosomal subunit. Contacts protein L29, and trigger factor when it is bound to the ribosome.

One of the early assembly proteins it binds 23S rRNA. One of the proteins that surrounds the polypeptide exit tunnel on the outside of the ribosome. Forms the main docking site for trigger factor binding to the ribosome. The chain is Large ribosomal subunit protein uL23 from Anaeromyxobacter sp. (strain Fw109-5).